The following is a 72-amino-acid chain: Kappa-conotoxin PVIIA (72 aa).

The first 22 residues, 1–22 (MKLTCVVIVVVLFLTACQLITA), serve as a signal peptide directing secretion. Residues 23–45 (DDSRRTQKHRALRSTTKLSLSTR) constitute a propeptide that is removed on maturation. Intrachain disulfides connect cysteine 46–cysteine 61, cysteine 53–cysteine 65, and cysteine 60–cysteine 71. Proline 49 is modified (4-hydroxyproline).

The protein belongs to the conotoxin O1 superfamily. Post-translationally, this toxin is not amidated at the C-terminal Val residue. Expressed by the venom duct.

Its subcellular location is the secreted. Its function is as follows. Kappa-conotoxins bind and inhibit voltage-gated potassium channels (Kv). This toxin inhibits the drosophila Shaker channel (IC(50)=57-80 nM). In vivo, when tested in fish, this toxin induces hyperactivity, followed by continuous contraction and extension of major fins, without immobilization or death. Injection of this peptide together with the delta-conotoxin PVIA causes the sudden tetanus of prey (STOP) syndrome, which is a single, lethal 'fin-pop' in envenomed fish. When tested in mice, induces hyperactivity. The protein is Kappa-conotoxin PVIIA of Conus purpurascens (Purple cone).